The primary structure comprises 1277 residues: MSKSLKKKSHWTSKVHESVIGRNPEGQLGFELKGGAENGQFPYLGEVKPGKVAYESGSKLVSEELLLEVNETPVAGLTIRDVLAVIKHCKDPLRLKCVKQGGIVDKDLRHYLNLRFQKGSVDHELQQIIRDNLYLRTVPCTTRPHKEGEVPGVDYIFITVEDFMELEKSGALLESGTYEDNYYGTPKPPAEPAPLLLNVTDQILPGATPSAEGKRKRNKSVTNMEKASIEPPEEEEEERPVVNGNGVVITPESSEHEDKSAGASGETPSQPYPAPVYSQPEELKDQMDDTKSTKPEENEDSDPLPDNWEMAYTEKGEVYFIDHNTKTTSWLDPRLAKKAKPAEECKENELPYGWEKIDDPIYGTYYVDHINRRTQFENPVLEAKRKLQQHNMPHTELGTKPLQAPGFREKPLFTRDASQLKGTFLSTTLKKSNMGFGFTIIGGDEPDEFLQVKSVIPDGPAAQDGKMETGDVIVYINEVCVLGHTHADVVKLFQSVPIGQSVNLVLCRGYPLPFDPEDPANSMVPPLAIMERPPPVMVNGRHNYETYLEYISRTSQSVPDITDRPPHSLHSMPADGQLDGTYPPPVHDDNVSVASSGATQAELMTLTIVKGAKGFGFTIADSPTGQRVKQILDIQGCPGLCEGDLIVEINQQNVQNLSHTEVVDILKDCPVGSETSLIIHRGGFFSPWKTPKPMVDRWENQGSPQTSLSAPAVPQSLPFPPALHRSSFPDSTEAFDPRKPDPYELYEKSRAIYESRQQVPPRTSFRMDSSGPDYKELDVHLRRMESGFGFRILGGDEPGQPILIGAVIAMGSADRDGRLHPGDELVYVDGIPVAGKTHRYVIDLMHHAARNGQVNLTVRRKVLCGGEPCPENGRSPGSVSTHHSSPRSDYATYANSNHAAPSNNASPPEGFASHSLQTSDVIIHRKENEGFGFVIISSLNRPESGATITVPHKIGRIIDGSPADRCAKLKVGDRILAVNGQSIINMPHADIVKLIKDAGLSVTLRIIPQEELNNPTSAPSSEKQSPMAQQHSPLAQQHSPLAQPSPATPNSPVAQPAPPQPLQLQGHENSYRSEVKARQDVKPDIRQPPFTDYRQPPLDYRQPPGGDYSQPSPLDYRQHSPDTRQYPLSDYRQPQDFDYFTVDMEKGAKGFGFSIRGGREYKMDLYVLRLAEDGPAIRNGRMRVGDQIIEINGESTRDMTHARAIELIKSGGRRVRLLLKRGTGQVPEYGMVPSSLSMCMKSDKHGSPYFYLLGHPKDTTNPTPGALPLPPPQACRK.

Positions 17-101 (ESVIGRNPEG…PLRLKCVKQG (85 aa)) constitute a PDZ domain. The region spanning 109–283 (RHYLNLRFQK…APVYSQPEEL (175 aa)) is the Guanylate kinase-like domain. Positions 205–308 (PGATPSAEGK…EDSDPLPDNW (104 aa)) are disordered. Positions 281-296 (EELKDQMDDTKSTKPE) are enriched in basic and acidic residues. WW domains lie at 302 to 335 (DPLP…DPRL) and 348 to 381 (NELP…NPVL). An interaction with DDN region spans residues 302-381 (DPLPDNWEMA…RRTQFENPVL (80 aa)). Residue Y362 is modified to Phosphotyrosine. The region spanning 426–510 (STTLKKSNMG…SVNLVLCRGY (85 aa)) is the PDZ 1 domain. The segment at 556-575 (QSVPDITDRPPHSLHSMPAD) is disordered. One can recognise a PDZ 2 domain in the interval 605 to 683 (TLTIVKGAKG…ETSLIIHRGG (79 aa)). At S686 the chain carries Phosphoserine. The region spanning 778–860 (DVHLRRMESG…NGQVNLTVRR (83 aa)) is the PDZ 3 domain. Position 827 is a phosphotyrosine (Y827). Positions 869–913 (CPENGRSPGSVSTHHSSPRSDYATYANSNHAAPSNNASPPEGFAS) are disordered. Phosphoserine is present on residues S884 and S885. Low complexity predominate over residues 894–908 (ANSNHAAPSNNASPP). A PDZ 4 domain is found at 920–1010 (DVIIHRKENE…SVTLRIIPQE (91 aa)). Over residues 1011–1042 (ELNNPTSAPSSEKQSPMAQQHSPLAQQHSPLA) the composition is skewed to polar residues. Positions 1011-1130 (ELNNPTSAPS…PDTRQYPLSD (120 aa)) are disordered. A compositionally biased stretch (basic and acidic residues) spans 1069-1085 (NSYRSEVKARQDVKPDI). Residues 1141 to 1223 (TVDMEKGAKG…RVRLLLKRGT (83 aa)) enclose the PDZ 5 domain.

Belongs to the MAGUK family. In terms of assembly, interacts (via its WW domains) with DRPLA. Interacts with CTNNB1, ACVR2A, SMAD2 and SMAD3. Part of a complex consisting of MAGI2/ARIP1, ACVR2A, ACVR1B and SMAD3. May interact with HTR2A and IGSF9. Interacts with HTR4. Interacts (via guanylate kinase domain) with DLGAP1. Interacts (via PDZ domains) with GRIN2A, GRID2 and NLGN1. Interacts with CTNND2. Interacts with MAGUIN-1. Interacts (via its second PDZ domain) with PTEN (via unphosphorylated C-terminus); this interaction diminishes the degradation rate of PTEN. Found in a complex, at least composed of KIDINS220, MAGI2, NTRK1 and RAPGEF2; the complex is mainly formed at late endosomes in a NGF-dependent manner. Interacts with RAPGEF2; the interaction occurs before or after nerve growth factor (NGF) stimulation. Isoform 1 interacts (via PDZ domain) with KIDINS220 isoform 2 (via C-terminal domain). Interacts with DDN. Identified in a complex with ACTN4, CASK, IQGAP1, NPHS1, SPTAN1 and SPTBN1. Interacts with DLL1. Found in a complex with IGSF9B and NLGN2; the interaction with IGSF9B is mediated via the PDZ 5 and PDZ 6 domains, while the interaction with NLGN2 is mediated via the WW1, WW2 and PDZ2 domains. Interacts (via PDZ 6 domain) with USH1G (via SAM domain); the interaction is triggered by phosphorylation of USH1G by CK2 and negatively regulates MAGI2-mediated endocytosis. Expressed in the foot process layer of podocytes of the kidney glomeruli but not in tubules (at protein level). Expressed in the brain.

It is found in the cytoplasm. The protein resides in the late endosome. The protein localises to the synapse. It localises to the synaptosome. Its subcellular location is the cell membrane. It is found in the cytoskeleton. The protein resides in the microtubule organizing center. The protein localises to the centrosome. It localises to the cell projection. Its subcellular location is the cilium. It is found in the centriole. The protein resides in the photoreceptor inner segment. The protein localises to the photoreceptor outer segment. Its function is as follows. Seems to act as scaffold molecule at synaptic junctions by assembling neurotransmitter receptors and cell adhesion proteins. Plays a role in nerve growth factor (NGF)-induced recruitment of RAPGEF2 to late endosomes and neurite outgrowth. May play a role in regulating activin-mediated signaling in neuronal cells. Enhances the ability of PTEN to suppress AKT1 activation. Plays a role in receptor-mediated clathrin-dependent endocytosis which is required for ciliogenesis. This chain is Membrane-associated guanylate kinase, WW and PDZ domain-containing protein 2 (Magi2), found in Rattus norvegicus (Rat).